The sequence spans 370 residues: 2-oxoisovalerate dehydrogenase subunit beta, mitochondrial (370 aa).

A mitochondrion-targeting transit peptide spans 1–25; that stretch reads MLRGNNIKKVNSLLVRSFHSTVGNR. Tyrosine 130 lines the thiamine diphosphate pocket. K(+) is bound by residues glycine 156, leucine 158, threonine 159, and glutamate 209.

Heterotetramer of 2 alpha and 2 beta chains. It depends on thiamine diphosphate as a cofactor.

The protein localises to the mitochondrion matrix. The catalysed reaction is N(6)-[(R)-lipoyl]-L-lysyl-[protein] + 3-methyl-2-oxobutanoate + H(+) = N(6)-[(R)-S(8)-2-methylpropanoyldihydrolipoyl]-L-lysyl-[protein] + CO2. In terms of biological role, the branched-chain alpha-keto dehydrogenase complex catalyzes the overall conversion of alpha-keto acids to acyl-CoA and CO(2). It contains multiple copies of three enzymatic components: branched-chain alpha-keto acid decarboxylase (E1), lipoamide acyltransferase (E2) and lipoamide dehydrogenase (E3). This chain is 2-oxoisovalerate dehydrogenase subunit beta, mitochondrial (bkdB), found in Dictyostelium discoideum (Social amoeba).